Consider the following 348-residue polypeptide: Probable UDP-arabinopyranose mutase 5 (348 aa).

Residues 100 to 102 (DDD) carry the DXD motif motif. Arg-148 carries N-linked (Glc...) arginine glycosylation.

It belongs to the RGP family. In terms of assembly, heteromers with RGP1 and RGP2. Requires Mn(2+) as cofactor. It depends on Mg(2+) as a cofactor. Post-translationally, reversibly glycosylated in vitro by UDP-glucose, UDP-xylose and UDP-galactose, but not UDP-mannose. In terms of tissue distribution, widely expressed at low levels.

The protein resides in the cytoplasm. The protein localises to the cytosol. Its subcellular location is the golgi apparatus. It catalyses the reaction UDP-beta-L-arabinofuranose = UDP-beta-L-arabinopyranose. In terms of biological role, probable UDP-L-arabinose mutase involved in the biosynthesis of cell wall non-cellulosic polysaccharides. This is Probable UDP-arabinopyranose mutase 5 from Arabidopsis thaliana (Mouse-ear cress).